The primary structure comprises 491 residues: Probable cobyric acid synthase (491 aa).

The 193-residue stretch at proline 252–phenylalanine 444 folds into the GATase cobBQ-type domain. The active-site Nucleophile is the cysteine 330. Histidine 436 is an active-site residue.

This sequence belongs to the CobB/CobQ family. CobQ subfamily.

The protein operates within cofactor biosynthesis; adenosylcobalamin biosynthesis. In terms of biological role, catalyzes amidations at positions B, D, E, and G on adenosylcobyrinic A,C-diamide. NH(2) groups are provided by glutamine, and one molecule of ATP is hydrogenolyzed for each amidation. In Methanococcus vannielii (strain ATCC 35089 / DSM 1224 / JCM 13029 / OCM 148 / SB), this protein is Probable cobyric acid synthase.